We begin with the raw amino-acid sequence, 469 residues long: UDP-glycosyltransferase 43 (469 aa).

UDP-alpha-D-glucose-binding positions include S280, 345-346 (WV), 363-371 (HCGWNSILE), and 385-388 (YSEQ).

It belongs to the UDP-glycosyltransferase family.

Inhibited by Cu(2+) or Zn(2+). Its function is as follows. Glycosyltransferase that catalyzes the C-glucosylation of daidzein to puerarin. Shows activity with the isoflavones daidzein and genistein, but has no activity towards flavonoids such as 2-hydroxynaringenin. Can use UDP-glucose, but not UDP-galactose or UDP-glucuronic acid as sugar donor. Does not require bivalent cations for activity. This is UDP-glycosyltransferase 43 from Pueraria montana var. lobata (Kudzu vine).